A 674-amino-acid polypeptide reads, in one-letter code: Carcinine transporter (674 aa).

At 1-53 (MSDIEDNDGDEYDELSELRQRHKPESQPSVDEAFDLDDLLPTIGEFGKYQKLL) the chain is on the cytoplasmic side. A helical transmembrane segment spans residues 54–74 (VFGICLPACIPCGFCAFNQLF). Residues 75–178 (MADTPDDYWC…DLVCDQDIYP (104 aa)) lie on the Extracellular side of the membrane. 3 N-linked (GlcNAc...) asparagine glycosylation sites follow: asparagine 122, asparagine 141, and asparagine 156. A helical membrane pass occupies residues 179–199 (TIGLAALNTGGPVGVYLFGLL). Residues 200-206 (NDRGGRR) are Cytoplasmic-facing. The chain crosses the membrane as a helical span at residues 207-227 (LSYFVCLATLLAGSLMTSLSK). Over 228 to 236 (DFWTWAGSR) the chain is Extracellular. Residues 237 to 257 (VIVGLTIPAVYQIPFIISLEL) form a helical membrane-spanning segment. Residues 258–264 (VGENYRS) are Cytoplasmic-facing. A helical transmembrane segment spans residues 265-285 (FVTVMTCTFYTSGIMLLSGVT). Residues 286 to 293 (YLERDWVR) lie on the Extracellular side of the membrane. A helical transmembrane segment spans residues 294 to 314 (LSYITSLPFYAYFLYMFVMPE). The Cytoplasmic segment spans residues 315–385 (SPRWLLMRGR…CRTPNMRLKT (71 aa)). Residues 386–406 (ILITLSWFANETVYLGLSYYG) form a helical membrane-spanning segment. Residues 407 to 414 (PALGTNQY) are Extracellular-facing. Residues 415-435 (VSFFLSAVVELPSYLCCWYFM) traverse the membrane as a helical segment. The Cytoplasmic portion of the chain corresponds to 436 to 441 (DTWGRR). Residues 442–462 (WPLSLSMILGGVACVITVMLP) traverse the membrane as a helical segment. The Extracellular segment spans residues 463–469 (DDAVDET). A helical membrane pass occupies residues 470-490 (LVLYLVSKALLSASFLIIYPF). At 491–500 (AGELYPTQVR) the chain is on the cytoplasmic side. A helical membrane pass occupies residues 501 to 521 (GIGIGASSYIGGLGLIGIPFI). Topologically, residues 522–527 (TYLGKD) are extracellular. The chain crosses the membrane as a helical span at residues 528–548 (NLKLPLVIMGFLSMLGGMTGL). Residues 549–674 (RLPETLHHRL…DGTMQLTHWI (126 aa)) are Cytoplasmic-facing. Positions 614–631 (RDSRRVREPAPRIDERTP) are enriched in basic and acidic residues. The segment at 614-647 (RDSRRVREPAPRIDERTPLDTTASGSGRPVHRPS) is disordered.

The protein belongs to the major facilitator (TC 2.A.1) superfamily. Organic cation transporter (TC 2.A.1.19) family. In terms of tissue distribution, expressed in photoreceptor cells.

It is found in the cell membrane. The protein resides in the cell projection. It localises to the axon. Functionally, carcinine transporter which is required for recycling of the neurotransmitter histamine in photoreceptor neurons of the compound eye. Following histamine release from photoreceptors and its uptake by glia where it is converted to carcinine, required for the uptake of carcinine from glia into photoreceptor cells where it can be hydrolyzed by tan to form histamine and beta-alanine. This chain is Carcinine transporter, found in Drosophila melanogaster (Fruit fly).